A 238-amino-acid polypeptide reads, in one-letter code: ATP synthase subunit a (238 aa).

A run of 5 helical transmembrane segments spans residues 17 to 37, 75 to 95, 112 to 132, 179 to 199, and 202 to 222; these read LSDM…AVAA, FLTL…LGLP, DATV…YYGV, ILLG…AVGA, and FPIM…AFIF.

The protein belongs to the ATPase A chain family. In terms of assembly, F-type ATPases have 2 components, CF(1) - the catalytic core - and CF(0) - the membrane proton channel. CF(1) has five subunits: alpha(3), beta(3), gamma(1), delta(1), epsilon(1). CF(0) has three main subunits: a(1), b(2) and c(9-12). The alpha and beta chains form an alternating ring which encloses part of the gamma chain. CF(1) is attached to CF(0) by a central stalk formed by the gamma and epsilon chains, while a peripheral stalk is formed by the delta and b chains.

Its subcellular location is the cell membrane. Its function is as follows. Key component of the proton channel; it plays a direct role in the translocation of protons across the membrane. The sequence is that of ATP synthase subunit a from Bacillus sp. (strain PS3).